A 659-amino-acid chain; its full sequence is MATEQTKGQSSESISSVLSERRKFPPPEAFSSQSHISSMEQYEKLYADAAADPDKYWGDLAEQFHWFKKWDSVLEWNAPYAKWFNGGTTNIAYNCLDVHVGSWRKNKAAIIWEGEEGNERILTYGELHRQVSKFANVLKIAGIKPGDKVAIYMGMVPELVIAVLACARVGAVHNVIFAGFAAHAITERVNDSRAKIVICADGTRRRGSTINLKNIVDEAIINTPSVKNVIVLKVTGEEIHMHDGMDHWWHDLMGLAVDECEPAQVDSEHPLFLLYTSGSTGKPKGILHTTAGYMVHAASSFKYVFDIKDEDIYFCTADIGWITGHTYIIYGPLLNGATVFMYEGAPNYPQWDRFWDIINRHKITILYTAPTAIRAFIRAGNEWVTKHDLSSLRLLGTVGEPINPEAWMWYHKYVGQEKCPIVDTWWQTETGGIMISPMPGATPTKPGTATRPLPGIMVDVVRKDGTPCNANEGGYLVVKRPWPSMLRTIYGDNERYEKTYWSEFPGMYFTGDGARKDDDGYIWIMGRVDDVVNVSGHRLGTSEVESALVSHEAVAEAAVVSRPDEIKGNALVAFVTLKDGYEGDAKLRDSLGKHVAKEIGAIAKPDEIRWAKGLPKTRSGKIMRRLLRELATSNEIKGDVTTLEDLGVIENLREQEDEG.

Residues 1 to 35 (MATEQTKGQSSESISSVLSERRKFPPPEAFSSQSH) form a disordered region. CoA is bound by residues 205–208 (RRGS), Thr323, and Asn347. Residues 399–401 (GEP), 423–428 (DTWWQT), Asp512, and Arg527 contribute to the ATP site. Ser535 contacts CoA. Arg538 serves as a coordination point for ATP. Positions 549, 551, and 554 each coordinate Mg(2+). Lys621 carries the N6-acetyllysine modification.

It belongs to the ATP-dependent AMP-binding enzyme family. Requires Mg(2+) as cofactor. Acetylated. Deacetylation by the SIR2-homolog deacetylase activates the enzyme.

It catalyses the reaction acetate + ATP + CoA = acetyl-CoA + AMP + diphosphate. Its function is as follows. Catalyzes the conversion of acetate into acetyl-CoA (AcCoA), an essential intermediate at the junction of anabolic and catabolic pathways. AcsA undergoes a two-step reaction. In the first half reaction, AcsA combines acetate with ATP to form acetyl-adenylate (AcAMP) intermediate. In the second half reaction, it can then transfer the acetyl group from AcAMP to the sulfhydryl group of CoA, forming the product AcCoA. In Chlorobaculum tepidum (strain ATCC 49652 / DSM 12025 / NBRC 103806 / TLS) (Chlorobium tepidum), this protein is Acetyl-coenzyme A synthetase.